The primary structure comprises 190 residues: Probable RNA-binding protein 18 (190 aa).

Residues 25 to 106 enclose the RRM domain; the sequence is HRLWIGNLDP…KKLVVRWAHA (82 aa). The segment at 166–190 is disordered; it reads VYSYFKPPDKKRTTPYSRTAWKSRR.

In Pongo abelii (Sumatran orangutan), this protein is Probable RNA-binding protein 18 (RBM18).